A 642-amino-acid chain; its full sequence is Threonine--tRNA ligase (642 aa).

Positions 1 to 63 constitute a TGS domain; it reads MSTVTVTLPD…TADVELEIVT (63 aa). Positions 242–533 are catalytic; the sequence is DHRKIGQEMD…LTEHYNGKFP (292 aa). Residues Cys334, His385, and His510 each coordinate Zn(2+).

It belongs to the class-II aminoacyl-tRNA synthetase family. Homodimer. It depends on Zn(2+) as a cofactor.

It localises to the cytoplasm. It carries out the reaction tRNA(Thr) + L-threonine + ATP = L-threonyl-tRNA(Thr) + AMP + diphosphate + H(+). Its function is as follows. Catalyzes the attachment of threonine to tRNA(Thr) in a two-step reaction: L-threonine is first activated by ATP to form Thr-AMP and then transferred to the acceptor end of tRNA(Thr). The polypeptide is Threonine--tRNA ligase (Haloarcula marismortui (strain ATCC 43049 / DSM 3752 / JCM 8966 / VKM B-1809) (Halobacterium marismortui)).